Consider the following 255-residue polypeptide: 4-hydroxy-tetrahydrodipicolinate reductase (255 aa).

Residues 9-14 (GFKGKM), 89-91 (GTT), and 115-118 (APNF) contribute to the NAD(+) site. His145 (proton donor/acceptor) is an active-site residue. His146 contacts (S)-2,3,4,5-tetrahydrodipicolinate. Catalysis depends on Lys149, which acts as the Proton donor. (S)-2,3,4,5-tetrahydrodipicolinate is bound at residue 155-156 (GT).

This sequence belongs to the DapB family.

The protein localises to the cytoplasm. It catalyses the reaction (S)-2,3,4,5-tetrahydrodipicolinate + NAD(+) + H2O = (2S,4S)-4-hydroxy-2,3,4,5-tetrahydrodipicolinate + NADH + H(+). The catalysed reaction is (S)-2,3,4,5-tetrahydrodipicolinate + NADP(+) + H2O = (2S,4S)-4-hydroxy-2,3,4,5-tetrahydrodipicolinate + NADPH + H(+). It functions in the pathway amino-acid biosynthesis; L-lysine biosynthesis via DAP pathway; (S)-tetrahydrodipicolinate from L-aspartate: step 4/4. In terms of biological role, catalyzes the conversion of 4-hydroxy-tetrahydrodipicolinate (HTPA) to tetrahydrodipicolinate. In Streptococcus suis (strain 98HAH33), this protein is 4-hydroxy-tetrahydrodipicolinate reductase.